The chain runs to 319 residues: Putative peptide biosynthesis protein YydG (319 aa).

A Radical SAM core domain is found at 1-214; the sequence is MYNKTVSINL…HCPGYDIVYH (214 aa). [4Fe-4S] cluster contacts are provided by C14, C18, and C21.

[4Fe-4S] cluster serves as cofactor.

Its function is as follows. Required for production of the modified peptide YydF. May activate a metalloenzyme (Potential). This Bacillus subtilis (strain 168) protein is Putative peptide biosynthesis protein YydG (yydG).